We begin with the raw amino-acid sequence, 103 residues long: Small ribosomal subunit protein uS10 (103 aa).

The protein belongs to the universal ribosomal protein uS10 family. As to quaternary structure, part of the 30S ribosomal subunit.

Its function is as follows. Involved in the binding of tRNA to the ribosomes. The sequence is that of Small ribosomal subunit protein uS10 from Sphingopyxis alaskensis (strain DSM 13593 / LMG 18877 / RB2256) (Sphingomonas alaskensis).